We begin with the raw amino-acid sequence, 585 residues long: MAGUK p55 subfamily member 3 (585 aa).

2 L27 domains span residues 6 to 60 (EDSG…ERQS) and 61 to 118 (PTPV…FDPV). The region spanning 137–218 (IVRLVKNKEP…SITLKIIPAT (82 aa)) is the PDZ domain. Residues 226-296 (ESKVFMRALF…PSKQFQERRL (71 aa)) form the SH3 domain. Position 307 is a phosphoserine (serine 307). The Guanylate kinase-like domain maps to 385–570 (SRLVVLIGSL…VCSQLRAVIE (186 aa)). Residues 510-530 (KRKTPPVSPDSEDPATPLDEQ) form a disordered region.

The protein belongs to the MAGUK family. Interacts with HTR2C; this interaction stabilizes the receptor at the plasma membrane and prevents the desensitization of the HTR2C receptor-mediated calcium response. Interacts with HTR2A. Interacts with HTR4. Interacts (via PDZ domain) with CADM1 (via C-terminus)Interacts (via PDZ domain) with CADM1; this interaction connects CADM1 with DLG1. Interacts (via Guanylate kinase-like domain) with PALS1. Interacts with DLG1 (via N-terminus); this interaction connects CADM1 with DLG1 and links CADM1 with the regulatory subunit of phosphoinositide-3-kinase (PI3K) by forming a multiprotein complex and participates in cell spreading.

Its subcellular location is the apical cell membrane. The protein localises to the cell membrane. It is found in the cell junction. It localises to the adherens junction. Functionally, participates in cell spreading through the phosphoinositide-3-kinase (PI3K) pathway by connecting CADM1 to DLG1 and the regulatory subunit of phosphoinositide-3-kinase (PI3K). Stabilizes HTR2C at the plasma membrane and prevents its desensitization. May participates in the maintenance of adherens junctions. The protein is MAGUK p55 subfamily member 3 of Rattus norvegicus (Rat).